The chain runs to 716 residues: Antibacterial effector protein Tle3 (716 aa).

The disordered stretch occupies residues 68 to 87 (PTLPGGQANPGYLTPAGYSL).

In terms of assembly, interacts in the cytoplasm with the adapter protein Tla3. Interacts in the periplasm with the immunity protein Tli3.

It localises to the secreted. It is found in the host periplasm. Its activity is regulated as follows. Neutralized by the immunity protein Tli3 in the periplasm of P.aeruginosa cells. In terms of biological role, antibacterial effector. Is toxic once delivered in the periplasm of prey bacteria. The polypeptide is Antibacterial effector protein Tle3 (Pseudomonas aeruginosa (strain ATCC 15692 / DSM 22644 / CIP 104116 / JCM 14847 / LMG 12228 / 1C / PRS 101 / PAO1)).